Consider the following 250-residue polypeptide: MLAKRIIPCLDIKDGQTVKGTNFVNLRQAGDPVELGRAYSEQGADELVFLDITASHEGRKTFAELVRRIAANISIPFTVGGGINELSDVDRLLNAGADKISINSSAIRHPQLIDDIAKHFGSQVCVLAVDAKQTENGWKCYLNGGRIETDKELTAWTKEAQERGAGEVLFTSMNHDGVKTGYANEALAELASQLSIPVIASGGAGQMEHFRDAFTLGKADAALAASVFHFGEIKIPELKSYLCDQGITVR.

Catalysis depends on residues D11 and D130.

Belongs to the HisA/HisF family. As to quaternary structure, heterodimer of HisH and HisF.

It localises to the cytoplasm. It catalyses the reaction 5-[(5-phospho-1-deoxy-D-ribulos-1-ylimino)methylamino]-1-(5-phospho-beta-D-ribosyl)imidazole-4-carboxamide + L-glutamine = D-erythro-1-(imidazol-4-yl)glycerol 3-phosphate + 5-amino-1-(5-phospho-beta-D-ribosyl)imidazole-4-carboxamide + L-glutamate + H(+). It functions in the pathway amino-acid biosynthesis; L-histidine biosynthesis; L-histidine from 5-phospho-alpha-D-ribose 1-diphosphate: step 5/9. Functionally, IGPS catalyzes the conversion of PRFAR and glutamine to IGP, AICAR and glutamate. The HisF subunit catalyzes the cyclization activity that produces IGP and AICAR from PRFAR using the ammonia provided by the HisH subunit. In Bacteroides fragilis (strain YCH46), this protein is Imidazole glycerol phosphate synthase subunit HisF.